The following is a 324-amino-acid chain: Polyketide biosynthesis acyltransferase homolog BaeD (324 aa).

Ser99 is an active-site residue.

Its subcellular location is the cytoplasm. The protein operates within antibiotic biosynthesis; bacillaene biosynthesis. Functionally, probably involved in some intermediate steps for the synthesis of the antibiotic polyketide bacillaene which is involved in secondary metabolism. The polypeptide is Polyketide biosynthesis acyltransferase homolog BaeD (baeD) (Bacillus velezensis (strain DSM 23117 / BGSC 10A6 / LMG 26770 / FZB42) (Bacillus amyloliquefaciens subsp. plantarum)).